Consider the following 648-residue polypeptide: Phosphatidylinositol polyphosphate 5-phosphatase type IV (648 aa).

Residues 1-64 (MPSKSACLRH…PLSMPAKPSN (64 aa)) form a disordered region. The span at 36–54 (TSASLPAADSQSSQTNSMP) shows a compositional bias: polar residues. A run of 2 repeats spans residues 59-62 (PAKP) and 76-79 (PQPP). The tract at residues 59–243 (PAKPSNQNLQ…AHSNLGPSRP (185 aa)) is 4 X 4 AA repeats of P-X-X-P. The disordered stretch occupies residues 99–158 (RFRGSQEDLTVQNGASPCRGSLQDSVAQSPAYSRPLPCLSTSLQEIPKPRRATGSEGGSP). Ser-103 carries the phosphoserine modification. Residues 120 to 129 (LQDSVAQSPA) are compositionally biased toward polar residues. Copy 3 of the repeat occupies 147–150 (PRRA). Thr-197 is modified (phosphothreonine). Residues 240–243 (PSRP) form repeat 4. Phosphoserine is present on residues Ser-245 and Ser-260. At Cys-645 the chain carries Cysteine methyl ester. Cys-645 carries S-farnesyl cysteine lipidation. Residues 646-648 (TVS) constitute a propeptide, removed in mature form.

This sequence belongs to the inositol 1,4,5-trisphosphate 5-phosphatase type IV family. Interacts (when prenylated) with PDE6D; this is important for normal location in cilia.

It is found in the cytoplasm. It localises to the cytoskeleton. Its subcellular location is the cilium axoneme. The protein resides in the golgi apparatus. The protein localises to the golgi stack membrane. It is found in the cell membrane. It localises to the cell projection. Its subcellular location is the ruffle. The protein resides in the nucleus. The enzyme catalyses a 1,2-diacyl-sn-glycero-3-phospho-(1D-myo-inositol-4,5-bisphosphate) + H2O = a 1,2-diacyl-sn-glycero-3-phospho-(1D-myo-inositol 4-phosphate) + phosphate. It carries out the reaction a 1,2-diacyl-sn-glycero-3-phospho-(1D-myo-inositol-3,4,5-trisphosphate) + H2O = a 1,2-diacyl-sn-glycero-3-phospho-(1D-myo-inositol-3,4-bisphosphate) + phosphate. It catalyses the reaction a 1,2-diacyl-sn-glycero-3-phospho-(1D-myo-inositol-3,5-bisphosphate) + H2O = a 1,2-diacyl-sn-glycero-3-phospho-(1D-myo-inositol-3-phosphate) + phosphate. Its function is as follows. Phosphatidylinositol (PtdIns) phosphatase that specifically hydrolyzes the 5-phosphate of phosphatidylinositol-3,4,5-trisphosphate (PtdIns(3,4,5)P3), phosphatidylinositol 4,5-bisphosphate PtdIns (4,5)P2 and phosphatidylinositol 3,5-bisphosphate (PtdIns(3,5)P2). Specific for lipid substrates, inactive towards water soluble inositol phosphates. Plays an essential role in the primary cilium by controlling ciliary growth and phosphoinositide 3-kinase (PI3K) signaling and stability. This chain is Phosphatidylinositol polyphosphate 5-phosphatase type IV (Inpp5e), found in Rattus norvegicus (Rat).